We begin with the raw amino-acid sequence, 853 residues long: DNA mismatch repair protein MutS (853 aa).

614-621 (GPNMGGKS) lines the ATP pocket.

It belongs to the DNA mismatch repair MutS family.

Functionally, this protein is involved in the repair of mismatches in DNA. It is possible that it carries out the mismatch recognition step. This protein has a weak ATPase activity. This is DNA mismatch repair protein MutS from Escherichia coli (strain K12 / MC4100 / BW2952).